A 335-amino-acid chain; its full sequence is Auxin-responsive protein IAA6 (335 aa).

The EAR-like (transcriptional repression) signature appears at 51–55; it reads LKLGL. Disordered stretches follow at residues 81-102, 143-180, and 188-207; these read LSFF…GAKR, KKGC…VGWP, and NLAS…DNAN. The PB1 domain maps to 217–321; sequence NPLVKINMDG…TAKRLRVLRS (105 aa).

The protein belongs to the Aux/IAA family. Homodimers and heterodimers. Highly expressed in roots. Expressed in shoots and flowers.

It is found in the nucleus. Functionally, aux/IAA proteins are short-lived transcriptional factors that function as repressors of early auxin response genes at low auxin concentrations. This is Auxin-responsive protein IAA6 (IAA6) from Oryza sativa subsp. japonica (Rice).